We begin with the raw amino-acid sequence, 932 residues long: Leucine--tRNA ligase (932 aa).

The 'HIGH' region motif lies at 38-48 (PYLNGNLHAGH). Positions 630-634 (KMSKS) match the 'KMSKS' region motif. Lys633 is an ATP binding site.

This sequence belongs to the class-I aminoacyl-tRNA synthetase family.

It localises to the cytoplasm. It carries out the reaction tRNA(Leu) + L-leucine + ATP = L-leucyl-tRNA(Leu) + AMP + diphosphate. The chain is Leucine--tRNA ligase from Archaeoglobus fulgidus (strain ATCC 49558 / DSM 4304 / JCM 9628 / NBRC 100126 / VC-16).